A 506-amino-acid polypeptide reads, in one-letter code: Protein nucleotidyltransferase YdiU (506 aa).

ATP-binding residues include G95, G97, R98, K118, D130, G131, R181, and R188. D257 serves as the catalytic Proton acceptor. Mg(2+) contacts are provided by N258 and D267. D267 lines the ATP pocket. The disordered stretch occupies residues 487–506; the sequence is KHYQDAPTPDQRVKQTFCGT.

This sequence belongs to the SELO family. Mg(2+) is required as a cofactor. Mn(2+) serves as cofactor.

The catalysed reaction is L-seryl-[protein] + ATP = 3-O-(5'-adenylyl)-L-seryl-[protein] + diphosphate. It carries out the reaction L-threonyl-[protein] + ATP = 3-O-(5'-adenylyl)-L-threonyl-[protein] + diphosphate. The enzyme catalyses L-tyrosyl-[protein] + ATP = O-(5'-adenylyl)-L-tyrosyl-[protein] + diphosphate. It catalyses the reaction L-histidyl-[protein] + UTP = N(tele)-(5'-uridylyl)-L-histidyl-[protein] + diphosphate. The catalysed reaction is L-seryl-[protein] + UTP = O-(5'-uridylyl)-L-seryl-[protein] + diphosphate. It carries out the reaction L-tyrosyl-[protein] + UTP = O-(5'-uridylyl)-L-tyrosyl-[protein] + diphosphate. Functionally, nucleotidyltransferase involved in the post-translational modification of proteins. It can catalyze the addition of adenosine monophosphate (AMP) or uridine monophosphate (UMP) to a protein, resulting in modifications known as AMPylation and UMPylation. This Shewanella denitrificans (strain OS217 / ATCC BAA-1090 / DSM 15013) protein is Protein nucleotidyltransferase YdiU.